A 525-amino-acid polypeptide reads, in one-letter code: Nucleolar and spindle-associated protein 1-A (525 aa).

4 disordered regions span residues 46–205 (ESKD…LHEA), 248–292 (EKTP…RFSA), 373–397 (TPES…PEKA), and 451–525 (SLSR…VPVQ). Polar residues predominate over residues 58 to 69 (SSLTDTDELNSS). Positions 82-92 (THRRGRGRKPL) are enriched in basic residues. Positions 106–127 (SVGTGTESLASETDNTQDQNCL) are enriched in polar residues. Positions 160–169 (TTEKRQKKAS) are enriched in basic and acidic residues. The segment covering 270–285 (PPTTGASPSRTPTNQR) has biased composition (polar residues). The span at 476 to 494 (CGSNNNVSVLKNNFKQPHL) shows a compositional bias: polar residues. A compositionally biased stretch (basic and acidic residues) spans 495–514 (QTREDRRKQHEQDRKGKRDQ).

It belongs to the NUSAP family. Interacts with DNA. Interacts with microtubules, ipo7, kpna2 and kpnb1. Microtubule stabilization is inhibited by ipo7 and kpna2, while microtubule bundling is inhibited by kpnb1. Active GTP-bound ran causes dissociation of ipo7 and kpnb1.

Its subcellular location is the cytoplasm. It localises to the nucleus. It is found in the cytoskeleton. The protein resides in the spindle. Microtubule-associated protein with the capacity to bundle and stabilize microtubules. May associate with chromosomes and promote the organization of meiotic or mitotic spindle microtubules around them. The protein is Nucleolar and spindle-associated protein 1-A (nusap1-a) of Xenopus laevis (African clawed frog).